Reading from the N-terminus, the 584-residue chain is AP-1-like transcription factor yap1 (584 aa).

Residues 23–179 form a disordered region; sequence LAALSSNQPP…AFRERKEKHL (157 aa). A Bipartite nuclear localization signal motif is present at residues 35–42; the sequence is QQNDKQRS. Over residues 36 to 48 the composition is skewed to basic and acidic residues; sequence QNDKQRSQAKTDP. Residues 52–67 show a composition bias toward low complexity; sequence PGNMSSGSFSMSPGFN. The Bipartite nuclear localization signal signature appears at 68 to 75; that stretch reads KTHPGSGG. The segment covering 79–94 has biased composition (acidic residues); the sequence is GDDESPFLDFNPELDF. 2 stretches are compositionally biased toward basic and acidic residues: residues 112–144 and 170–179; these read SEEH…DKAA and AFRERKEKHL. The 64-residue stretch at 154–217 folds into the bZIP domain; sequence SEPTSKRKAQ…ERLQVELREY (64 aa). The interval 159-180 is basic motif; sequence KRKAQNRAAQRAFRERKEKHLK. The interval 182–189 is leucine-zipper; it reads LETKVDEL. The transcription activation 1 stretch occupies residues 211-332; the sequence is QVELREYRKR…PSPKVPSVYN (122 aa). 2 disordered regions span residues 267-379 and 418-441; these read IFNG…TKLN and RGKS…TPGP. Residues 284–296 form a n-CRD region; it reads SSPATSDSQVPGV. Over residues 300–309 the composition is skewed to polar residues; the sequence is ETLNGSNNRG. Over residues 336–362 the composition is skewed to low complexity; sequence SASSHDSSNSCSPSSSSDSHQSQMLSS. Composition is skewed to polar residues over residues 363–379 and 422–437; these read NGTS…TKLN and ESVS…NYEQ. The interval 377–480 is transcription activation 2; the sequence is KLNDSVQNHH…SQDFGTFFDD (104 aa). Intrachain disulfides connect C531-C555, C531-C564, and C555-C564. A c-CRD region spans residues 531–564; it reads CTKIWDRLQSMEKFRNGEIDVDNLCSELRTKARC. The Nuclear export signal signature appears at 549–556; the sequence is IDVDNLCS.

This sequence belongs to the bZIP family. YAP subfamily. Depending on the oxidative stress inducing agent, yap1 can undergo two distinct conformational changes, both involving disulfide bond formation, and both masking the nuclear export signal, thus abolishing nuclear export.

The protein localises to the nucleus. It is found in the cytoplasm. Functionally, transcription activator involved in oxidative stress response and redox homeostasis. Regulates the transcription of genes encoding antioxidant enzymes and components of the cellular thiol-reducing pathways. May be involved in antifungal resistance to voriconazole. This is AP-1-like transcription factor yap1 from Aspergillus flavus (strain ATCC 200026 / FGSC A1120 / IAM 13836 / NRRL 3357 / JCM 12722 / SRRC 167).